Consider the following 208-residue polypeptide: Large ribosomal subunit protein uL4 (208 aa).

The segment at 42 to 77 (SMRQGTHKTKTKTEVSGGGRKPWRQKGTGRARQGSI) is disordered.

Belongs to the universal ribosomal protein uL4 family. Part of the 50S ribosomal subunit.

Functionally, one of the primary rRNA binding proteins, this protein initially binds near the 5'-end of the 23S rRNA. It is important during the early stages of 50S assembly. It makes multiple contacts with different domains of the 23S rRNA in the assembled 50S subunit and ribosome. Forms part of the polypeptide exit tunnel. The polypeptide is Large ribosomal subunit protein uL4 (Spiroplasma kunkelii).